The chain runs to 255 residues: Hydroxyacylglutathione hydrolase (255 aa).

Residues His56, His58, Asp60, His61, His114, Asp133, and His171 each coordinate Zn(2+).

The protein belongs to the metallo-beta-lactamase superfamily. Glyoxalase II family. As to quaternary structure, monomer. The cofactor is Zn(2+).

The catalysed reaction is an S-(2-hydroxyacyl)glutathione + H2O = a 2-hydroxy carboxylate + glutathione + H(+). It functions in the pathway secondary metabolite metabolism; methylglyoxal degradation; (R)-lactate from methylglyoxal: step 2/2. Its function is as follows. Thiolesterase that catalyzes the hydrolysis of S-D-lactoyl-glutathione to form glutathione and D-lactic acid. This Cereibacter sphaeroides (strain ATCC 17029 / ATH 2.4.9) (Rhodobacter sphaeroides) protein is Hydroxyacylglutathione hydrolase.